Here is a 243-residue protein sequence, read N- to C-terminus: Cell division protein ZipA (243 aa).

The Periplasmic segment spans residues 1 to 4 (MSDV). The chain crosses the membrane as a helical span at residues 5–25 (TLLRIGIAIVGILFVAAVFFF). Over 26–243 (STPKTSAHRV…VPPLIKNSRW (218 aa)) the chain is Cytoplasmic. The tract at residues 32–89 (AHRVRTKKEEPPRERREPMLSTEVDNSPHQSVDEVPASVPQQQVNPEATKPGEIELGK) is disordered. Positions 38 to 49 (KKEEPPRERREP) are enriched in basic and acidic residues.

It belongs to the ZipA family. In terms of assembly, interacts with FtsZ via their C-terminal domains.

Its subcellular location is the cell inner membrane. Essential cell division protein that stabilizes the FtsZ protofilaments by cross-linking them and that serves as a cytoplasmic membrane anchor for the Z ring. Also required for the recruitment to the septal ring of downstream cell division proteins. In Xylella fastidiosa (strain Temecula1 / ATCC 700964), this protein is Cell division protein ZipA.